The following is a 287-amino-acid chain: 2-dehydro-3-deoxyphosphooctonate aldolase (287 aa).

Belongs to the KdsA family.

The protein localises to the cytoplasm. It catalyses the reaction D-arabinose 5-phosphate + phosphoenolpyruvate + H2O = 3-deoxy-alpha-D-manno-2-octulosonate-8-phosphate + phosphate. It participates in carbohydrate biosynthesis; 3-deoxy-D-manno-octulosonate biosynthesis; 3-deoxy-D-manno-octulosonate from D-ribulose 5-phosphate: step 2/3. Its pathway is bacterial outer membrane biogenesis; lipopolysaccharide biosynthesis. This is 2-dehydro-3-deoxyphosphooctonate aldolase from Rhodopseudomonas palustris (strain BisB5).